The following is a 175-amino-acid chain: MEEDDHGGKHDALSALSQWLWSKPLGQHNADLDDDEEVTTGQEELFLPEEQAQARHLFSRKTISREVPADESRSGRVYQTAQHSLMEYSRPTMSIKSRWSFWSSSPKPLPKTPVPSLTSWTHTVNSTPFPQLSTSSGSQSPGKRRLQRLTSMERNGTTLPRTNSGSSTKAMVLHR.

Residues 30–47 are homodimerization; sequence ADLDDDEEVTTGQEELFL. The interval 50–156 is RNA-binding; the sequence is EQAQARHLFS…QRLTSMERNG (107 aa). Disordered stretches follow at residues 58–89 and 103–175; these read FSRK…MEYS and SSSP…VLHR. Positions 63–74 are enriched in basic and acidic residues; it reads ISREVPADESRS. 2 positions are modified to phosphoserine: S64 and S133. 2 stretches are compositionally biased toward polar residues: residues 115 to 141 and 148 to 169; these read PSLT…SQSP and RLTS…SSTK.

Belongs to the polerovirus movement protein family. Homodimer. Phosphorylated.

Its subcellular location is the host cell junction. The protein localises to the host plasmodesma. It is found in the host Golgi apparatus. In terms of biological role, together with movement protein P3a, facilitates long-distance movement of virions in host. Transports viral genome to neighboring plant cells directly through plasmosdesmata, without any budding. The movement protein allows efficient cell to cell propagation, by bypassing the host cell wall barrier. Binds ssRNA. In Beta vulgaris (Sugar beet), this protein is Movement protein.